The following is a 185-amino-acid chain: Peptide deformylase (185 aa).

C94 and H136 together coordinate Fe cation. Residue E137 is part of the active site. H140 contributes to the Fe cation binding site.

The protein belongs to the polypeptide deformylase family. The cofactor is Fe(2+).

The enzyme catalyses N-terminal N-formyl-L-methionyl-[peptide] + H2O = N-terminal L-methionyl-[peptide] + formate. Removes the formyl group from the N-terminal Met of newly synthesized proteins. Requires at least a dipeptide for an efficient rate of reaction. N-terminal L-methionine is a prerequisite for activity but the enzyme has broad specificity at other positions. This is Peptide deformylase from Chlorobium limicola (strain DSM 245 / NBRC 103803 / 6330).